A 380-amino-acid chain; its full sequence is MPSSWGKIFKVSTFGESHGTSVGVVVEGVPAGIPIRLEEIQKDLNRRRPGQSNLTTPRDETDTVRVVSGVFEGKTIGSPIALIVDNQNTISKDYENLRTTFRPSHADYTYQMKYGFRAHVGGGRSSVRETIGRVAAAAIARMILKDDLGIETIAWVDSIGTVQSNIGDKYPKSREEVDQNEVRCPDVGSADQMRSLILKMKEAGDSVGGTIQCVSYNLPPGLGDPVYDKLDGDLAKAILSIPACKGFEVGSGFSGTLLTGSSHNDEFYVEEGTGRVRTRTNHSGGLQGGISNGEELVIRAAFKPTSTIFKKQNTINLKGEETILEAKGRHDPCVLPRAVPIIEAVVNLVLIDAYLYQRAINPQWFQKWARIPDYYKDLEL.

Position 47 (R47) interacts with NADP(+). Residues 124 to 126 (RSS), G288, 303 to 307 (KPTST), and R329 contribute to the FMN site.

It belongs to the chorismate synthase family. As to quaternary structure, homotetramer. FMNH2 serves as cofactor.

The catalysed reaction is 5-O-(1-carboxyvinyl)-3-phosphoshikimate = chorismate + phosphate. Its pathway is metabolic intermediate biosynthesis; chorismate biosynthesis; chorismate from D-erythrose 4-phosphate and phosphoenolpyruvate: step 7/7. Catalyzes the anti-1,4-elimination of the C-3 phosphate and the C-6 proR hydrogen from 5-enolpyruvylshikimate-3-phosphate (EPSP) to yield chorismate, which is the branch point compound that serves as the starting substrate for the three terminal pathways of aromatic amino acid biosynthesis. This reaction introduces a second double bond into the aromatic ring system. The protein is Chorismate synthase of Leptospira interrogans serogroup Icterohaemorrhagiae serovar copenhageni (strain Fiocruz L1-130).